The chain runs to 213 residues: Peroxisomal protein 2 (213 aa).

Residues Glu-211 to Leu-213 carry the Peroxisomal target signal 1 (PTS1) motif.

The protein belongs to the PXP2 family.

The protein resides in the peroxisome matrix. It localises to the cytoplasm. Its subcellular location is the cytosol. The protein localises to the nucleus. Probably involved in peroxisome formation or maintenance as well as in amino acid metabolism. The sequence is that of Peroxisomal protein 2 from Schizosaccharomyces pombe (strain 972 / ATCC 24843) (Fission yeast).